The following is a 447-amino-acid chain: Tetratricopeptide repeat protein 23 (447 aa).

TPR repeat units follow at residues 45 to 78, 137 to 170, 186 to 219, and 356 to 389; these read LHLC…TRIC, IELF…SKEL, ARIR…VEIS, and AETY…QTLL.

Found Associated with the EvC complex composed of EFCAB7, IQCE, EVC2 and EVC.

Its subcellular location is the cell projection. The protein localises to the cilium. Participates positively in the ciliary Hedgehog (Hh) signaling. This is Tetratricopeptide repeat protein 23 (TTC23) from Homo sapiens (Human).